The primary structure comprises 219 residues: Proteasome subunit beta type-9 (219 aa).

Residues 1–20 (MLRAGAPTAGSFRTEEVHTG) constitute a propeptide, removed in mature form. Thr-21 acts as the Nucleophile in catalysis. N6-acetyllysine is present on residues Lys-53 and Lys-109.

The protein belongs to the peptidase T1B family. The 26S proteasome consists of a 20S proteasome core and two 19S regulatory subunits. The 20S proteasome core is composed of 28 subunits that are arranged in four stacked rings, resulting in a barrel-shaped structure. The two end rings are each formed by seven alpha subunits, and the two central rings are each formed by seven beta subunits. The catalytic chamber with the active sites is on the inside of the barrel. Component of the immunoproteasome, where it displaces the equivalent housekeeping subunit PSMB6. Component of the spermatoproteasome, a form of the proteasome specifically found in testis. In terms of processing, autocleaved. The resulting N-terminal Thr residue of the mature subunit is responsible for the nucleophile proteolytic activity.

It is found in the cytoplasm. Its subcellular location is the nucleus. It carries out the reaction Cleavage of peptide bonds with very broad specificity.. In terms of biological role, the proteasome is a multicatalytic proteinase complex which is characterized by its ability to cleave peptides with Arg, Phe, Tyr, Leu, and Glu adjacent to the leaving group at neutral or slightly basic pH. The proteasome has an ATP-dependent proteolytic activity. This subunit is involved in antigen processing to generate class I binding peptides. The polypeptide is Proteasome subunit beta type-9 (Psmb9) (Mus musculus bactrianus (Southwestern Asian house mouse)).